A 599-amino-acid polypeptide reads, in one-letter code: Elongation factor 4 (599 aa).

Residues 2–184 form the tr-type G domain; that stretch reads KNIRNFSIIA…RLVRDIPPPE (183 aa). Residues 14–19 and 131–134 each bind GTP; these read DHGKST and NKID.

Belongs to the TRAFAC class translation factor GTPase superfamily. Classic translation factor GTPase family. LepA subfamily.

It localises to the cell inner membrane. The catalysed reaction is GTP + H2O = GDP + phosphate + H(+). Required for accurate and efficient protein synthesis under certain stress conditions. May act as a fidelity factor of the translation reaction, by catalyzing a one-codon backward translocation of tRNAs on improperly translocated ribosomes. Back-translocation proceeds from a post-translocation (POST) complex to a pre-translocation (PRE) complex, thus giving elongation factor G a second chance to translocate the tRNAs correctly. Binds to ribosomes in a GTP-dependent manner. The protein is Elongation factor 4 of Klebsiella pneumoniae subsp. pneumoniae (strain ATCC 700721 / MGH 78578).